Consider the following 119-residue polypeptide: Chorion class CA protein ERA.2 (119 aa).

Positions 1-21 (MSKLVVFLFCIQVCFIQNVYS) are cleaved as a signal peptide. Residues 22-55 (QCLGRVGPGGPPLGPYGGPLGGPGYGPVGYGGCG) are left arm. The tract at residues 56–103 (GYGGSGIGNVAVAGELPVAGSTGVTGQVPVIGAVEFAGPACAVGSVSI) is central domain. Residues 104–119 (SGACGPTCGCGGSPFY) form a right arm region.

The protein belongs to the chorion protein family.

Its function is as follows. This protein is one of many from the eggshell of the silk moth. The protein is Chorion class CA protein ERA.2 (ERA.2) of Bombyx mori (Silk moth).